The primary structure comprises 1278 residues: MPVVINSFNYNDPVNDDTILYMQIPYEEKSKKYYKAFEIMRNVWIIPERNTIGTDPSDFDPPASLENGSSAYYDPNYLTTDAEKDRYLKTTIKLFKRINSNPAGEVLLQEISYAKPYLGNEHTPINEFHPVTRTTSVNIKSSTNVKSSIILNLLVLGAGPDIFENSSYPVRKLMDSGGVYDPSNDGFGSINIVTFSPEYEYTFNDISGGYNSSTESFIADPAISLAHELIHALHGLYGARGVTYKETIKVKQAPLMIAEKPIRLEEFLTFGGQDLNIITSAMKEKIYNNLLANYEKIATRLSRVNSAPPEYDINEYKDYFQWKYGLDKNADGSYTVNENKFNEIYKKLYSFTEIDLANKFKVKCRNTYFIKYGFLKVPNLLDDDIYTVSEGFNIGNLAVNNRGQNIKLNPKIIDSIPDKGLVEKIVKFCKSVIPRKGTKAPPRLCIRVNNRELFFVASESSYNENDINTPKEIDDTTNLNNNYRNNLDEVILDYNSETIPQISNQTLNTLVQDDSYVPRYDSNGTSEIEEHNVVDLNVFFYLHAQKVPEGETNISLTSSIDTALSEESQVYTFFSSEFINTINKPVHAALFISWINQVIRDFTTEATQKSTFDKIADISLVVPYVGLALNIGNEVQKENFKEAFELLGAGILLEFVPELLIPTILVFTIKSFIGSSENKNKIIKAINNSLMERETKWKEIYSWIVSNWLTRINTQFNKRKEQMYQALQNQVDAIKTVIEYKYNNYTSDERNRLESEYNINNIREELNKKVSLAMENIERFITESSIFYLMKLINEAKVSKLREYDEGVKEYLLDYISEHRSILGNSVQELNDLVTSTLNNSIPFELSSYTNDKILILYFNKLYKKIKDNSILDMRYENNKFIDISGYGSNISINGDVYIYSTNRNQFGIYSSKPSEVNIAQNNDIIYNGRYQNFSISFWVRIPKYFNKVNLNNEYTIIDCIRNNNSGWKISLNYNKIIWTLQDTAGNNQKLVFNYTQMISISDYINKWIFVTITNNRLGNSRIYINGNLIDEKSISNLGDIHVSDNILFKIVGCNDTRYVGIRYFKVFDTELGKTEIETLYSDEPDPSILKDFWGNYLLYNKRYYLLNLLRTDKSITQNSNFLNINQQRGVYQKPNIFSNTRLYTGVEVIIRKNGSTDISNTDNFVRKNDLAYINVVDRDVEYRLYADISIAKPEKIIKLIRTSNSNNSLGQIIVMDSIGNNCTMNFQNNNGGNIGLLGFHSNNLVASSWYYNNIRKNTSSNGCFWSFISKEHGWQEN.

His227 contributes to the Zn(2+) binding site. The active site involves Glu228. Zn(2+)-binding residues include His231 and Glu266. An intrachain disulfide couples Cys429 to Cys445. Positions 440-862 (APPRLCIRVN…KILILYFNKL (423 aa)) are translocation domain (TD). Positions 485–534 (NNLDEVILDYNSETIPQISNQTLNTLVQDDSYVPRYDSNGTSEIEEHNVV) are belt. Residues 717-783 (NKRKEQMYQA…MENIERFITE (67 aa)) adopt a coiled-coil conformation. Positions 864 to 1085 (KKIKDNSILD…EIETLYSDEP (222 aa)) are N-terminus of receptor binding domain (N-RBD). A C-terminus of receptor binding domain (C-RBD) region spans residues 1086–1278 (DPSILKDFWG…ISKEHGWQEN (193 aa)). Residues Arg1111 and Glu1195 each contribute to the a ganglioside GD1a (d18:1(4E)) site. Host ganglioside GD1a binding stretches follow at residues 1240–1241 (FH) and 1248–1250 (SSW). The Host ganglioside-binding motif motif lies at 1245-1248 (LVAS). Arg1256 lines the a ganglioside GD1a (d18:1(4E)) pocket.

This sequence belongs to the peptidase M27 family. Heterodimer; disulfide-linked heterodimer of a light chain (LC) and a heavy chain (HC). The LC has the proteolytic/pharmacological activity, while the N- and C-terminal of the HC mediate channel formation and toxin binding, respectively. Interacts with host synaptic vesicle glycoproteins SV2A, SV2B and SV2C. HC interacts with a complex including at least host SV2 and synaptotagmin-1 (SYT1); copurification depends on glycosylation of SV2. The cofactor is Zn(2+).

The protein localises to the secreted. It is found in the host cytoplasm. Its subcellular location is the host cytosol. The protein resides in the host synapse. It localises to the host presynaptic cell membrane. The protein localises to the host cytoplasmic vesicle. It is found in the host secretory vesicle. Its subcellular location is the host synaptic vesicle membrane. The catalysed reaction is Limited hydrolysis of proteins of the neuroexocytosis apparatus, synaptobrevins, SNAP25 or syntaxin. No detected action on small molecule substrates.. Botulinum toxin causes flaccid paralysis by inhibiting neurotransmitter (acetylcholine) release from the presynaptic membranes of nerve terminals of the eukaryotic host skeletal and autonomic nervous system, with frequent heart or respiratory failure. Precursor of botulinum neurotoxin F which may have 2 coreceptors; complex polysialylated gangliosides found on neural tissue and specific membrane-anchored proteins found in synaptic vesicles. Receptor proteins are exposed on host presynaptic cell membrane during neurotransmitter release, when the toxin heavy chain (HC) binds to them. Upon synaptic vesicle recycling the toxin is taken up via the endocytic pathway. When the pH of the toxin-containing endosome drops a structural rearrangement occurs so that the N-terminus of the HC forms pores that allows the light chain (LC) to translocate into the cytosol. Once in the cytosol the disulfide bond linking the 2 subunits is reduced and LC cleaves its target protein on synaptic vesicles, preventing their fusion with the cytoplasmic membrane and thus neurotransmitter release. Requires complex gangliosides for full neurotoxicity. Electrical stimulation increases uptake of toxin, presumably by transiently exposing a receptor usually found in eukaryotic target synaptic vesicles. Blocks neurotransmitter release by cleaving synaptobrevin-2/VAMP2. It is not clear whether a synaptic vesicle protein acts as its receptor; there is evidence for and against SV2 fulfilling this function. Its function is as follows. Has protease activity. After translocation into the eukaryotic host cytosol, inhibits neurotransmitter release by acting as a zinc endopeptidase that catalyzes the hydrolysis of the '58-Gln-|-Lys-59' bond of synaptobrevin-2/VAMP2 and probably also the equivalent 'Gln-|-Lys' sites in VAMP1 and VAMP3. Substrate specificity is conferred by multiple interactions of LC with substrate. In terms of biological role, responsible for host epithelial cell transcytosis, host nerve cell targeting and translocation of light chain (LC) into host cytosol. Composed of 3 subdomains; the translocation domain (TD), and N-terminus and C-terminus of the receptor-binding domain (RBD). The RBD is responsible for the adherence of the toxin to the cell surface. The N-terminus of the TD wraps an extended belt around the perimeter of the LC, protecting Zn(2+) in the active site; it may also prevent premature LC dissociation from the translocation channel and protect toxin prior to translocation. Isolated HC binds to host synaptosomes and neurons, significantly decreases uptake and toxicity of whole BoNT/F. Interferes with uptake of BoNT/E and to a lesser extent BoNT/C. in vitro binds gangliosides GT1b, GD1b and GD1a. Binds to synaptic vesicle glycoproteins SV2A, SV2B and SV2C which may serve as coreceptors with gangliosides. Interaction with SV2 proteins requires SV2 glycosylation. However knockout SV2A/SV2B mice still cleave synaptobrevin, leaving the identification of its receptor unclear. The sequence is that of Botulinum neurotoxin type F from Clostridium botulinum (strain Langeland / NCTC 10281 / Type F).